A 227-amino-acid polypeptide reads, in one-letter code: Putative N-acetylmannosamine-6-phosphate 2-epimerase (227 aa).

This sequence belongs to the NanE family.

The enzyme catalyses an N-acyl-D-glucosamine 6-phosphate = an N-acyl-D-mannosamine 6-phosphate. It functions in the pathway amino-sugar metabolism; N-acetylneuraminate degradation; D-fructose 6-phosphate from N-acetylneuraminate: step 3/5. Its function is as follows. Converts N-acetylmannosamine-6-phosphate (ManNAc-6-P) to N-acetylglucosamine-6-phosphate (GlcNAc-6-P). The polypeptide is Putative N-acetylmannosamine-6-phosphate 2-epimerase (Shouchella clausii (strain KSM-K16) (Alkalihalobacillus clausii)).